The following is a 242-amino-acid chain: Biosynthetic peptidoglycan transglycosylase (242 aa).

Residues I19–V39 form a helical membrane-spanning segment.

Belongs to the glycosyltransferase 51 family.

The protein resides in the cell inner membrane. The catalysed reaction is [GlcNAc-(1-&gt;4)-Mur2Ac(oyl-L-Ala-gamma-D-Glu-L-Lys-D-Ala-D-Ala)](n)-di-trans,octa-cis-undecaprenyl diphosphate + beta-D-GlcNAc-(1-&gt;4)-Mur2Ac(oyl-L-Ala-gamma-D-Glu-L-Lys-D-Ala-D-Ala)-di-trans,octa-cis-undecaprenyl diphosphate = [GlcNAc-(1-&gt;4)-Mur2Ac(oyl-L-Ala-gamma-D-Glu-L-Lys-D-Ala-D-Ala)](n+1)-di-trans,octa-cis-undecaprenyl diphosphate + di-trans,octa-cis-undecaprenyl diphosphate + H(+). The protein operates within cell wall biogenesis; peptidoglycan biosynthesis. Its function is as follows. Peptidoglycan polymerase that catalyzes glycan chain elongation from lipid-linked precursors. The sequence is that of Biosynthetic peptidoglycan transglycosylase from Citrobacter koseri (strain ATCC BAA-895 / CDC 4225-83 / SGSC4696).